A 260-amino-acid chain; its full sequence is UPF0246 protein BTH_I1090 (260 aa).

It belongs to the UPF0246 family.

This chain is UPF0246 protein BTH_I1090, found in Burkholderia thailandensis (strain ATCC 700388 / DSM 13276 / CCUG 48851 / CIP 106301 / E264).